We begin with the raw amino-acid sequence, 377 residues long: Nitric oxide reductase FlRd-NAD(+) reductase (377 aa).

This sequence belongs to the FAD-dependent oxidoreductase family. The cofactor is FAD.

The protein localises to the cytoplasm. It catalyses the reaction 2 reduced [nitric oxide reductase rubredoxin domain] + NAD(+) + H(+) = 2 oxidized [nitric oxide reductase rubredoxin domain] + NADH. It functions in the pathway nitrogen metabolism; nitric oxide reduction. Functionally, one of at least two accessory proteins for anaerobic nitric oxide (NO) reductase. Reduces the rubredoxin moiety of NO reductase. The chain is Nitric oxide reductase FlRd-NAD(+) reductase (norW) from Shigella boydii serotype 4 (strain Sb227).